The primary structure comprises 274 residues: Glutamate racemase (274 aa).

Substrate is bound by residues 9–10 (DS) and 41–42 (YG). The Proton donor/acceptor role is filled by Cys-72. Residue 73 to 74 (NT) participates in substrate binding. Cys-184 serves as the catalytic Proton donor/acceptor. 185–186 (TH) lines the substrate pocket.

Belongs to the aspartate/glutamate racemases family.

It catalyses the reaction L-glutamate = D-glutamate. It functions in the pathway cell wall biogenesis; peptidoglycan biosynthesis. Its function is as follows. Provides the (R)-glutamate required for cell wall biosynthesis. The sequence is that of Glutamate racemase from Oceanobacillus iheyensis (strain DSM 14371 / CIP 107618 / JCM 11309 / KCTC 3954 / HTE831).